Reading from the N-terminus, the 110-residue chain is Large ribosomal subunit protein uL24 (110 aa).

The protein belongs to the universal ribosomal protein uL24 family. As to quaternary structure, part of the 50S ribosomal subunit.

Functionally, one of two assembly initiator proteins, it binds directly to the 5'-end of the 23S rRNA, where it nucleates assembly of the 50S subunit. Its function is as follows. One of the proteins that surrounds the polypeptide exit tunnel on the outside of the subunit. The chain is Large ribosomal subunit protein uL24 from Roseiflexus sp. (strain RS-1).